Reading from the N-terminus, the 184-residue chain is Photosystem I assembly protein Ycf4 (184 aa).

Helical transmembrane passes span phenylalanine 22 to serine 42 and isoleucine 57 to serine 77.

The protein belongs to the Ycf4 family.

The protein localises to the plastid. Its subcellular location is the chloroplast thylakoid membrane. In terms of biological role, seems to be required for the assembly of the photosystem I complex. This is Photosystem I assembly protein Ycf4 from Lactuca sativa (Garden lettuce).